The primary structure comprises 447 residues: Multicopper oxidase mco (447 aa).

Residues 1–25 (MMNMKEDKKNTMDMTNMKHHDERKK) are compositionally biased toward basic and acidic residues. The disordered stretch occupies residues 1-29 (MMNMKEDKKNTMDMTNMKHHDERKKLNSS). Cu cation contacts are provided by His-107, His-109, His-147, His-149, His-375, His-378, His-380, His-428, Cys-429, His-430, His-434, and Met-439.

Belongs to the multicopper oxidase family. Cu cation is required as a cofactor.

The protein resides in the cytoplasm. Functionally, may be involved in copper homeostasis and oxidative stress response. This is Multicopper oxidase mco (mco) from Staphylococcus haemolyticus (strain JCSC1435).